The chain runs to 204 residues: Ubiquitin-conjugating enzyme E2 T (204 aa).

A UBC core domain is found at 2 to 152 (QRASRLKKEL…AKQWTEAHAR (151 aa)). Cys86 acts as the Glycyl thioester intermediate in catalysis. Glycyl lysine isopeptide (Lys-Gly) (interchain with G-Cter in ubiquitin) cross-links involve residues Lys91 and Lys181. Positions 150 to 204 (HARQKQKADEEELGTSSEVGDSEESHSTQKRKARPLGGMEKKFSPDVQRVYPGPS) are disordered. Glycyl lysine isopeptide (Lys-Gly) (interchain with G-Cter in SUMO2) cross-links involve residues Lys190 and Lys191. The residue at position 193 (Ser193) is a Phosphoserine.

This sequence belongs to the ubiquitin-conjugating enzyme family. As to quaternary structure, interacts with FANCL and BRCA1. In terms of processing, auto-ubiquitinated. Effects of auto-monoubiquitination at Lys-91 and Lys-181 are unclear.

Its subcellular location is the nucleus. It carries out the reaction S-ubiquitinyl-[E1 ubiquitin-activating enzyme]-L-cysteine + [E2 ubiquitin-conjugating enzyme]-L-cysteine = [E1 ubiquitin-activating enzyme]-L-cysteine + S-ubiquitinyl-[E2 ubiquitin-conjugating enzyme]-L-cysteine.. The protein operates within protein modification; protein ubiquitination. Its function is as follows. Accepts ubiquitin from the E1 complex and catalyzes its covalent attachment to other proteins. Catalyzes monoubiquitination. Involved in mitomycin-C (MMC)-induced DNA repair: acts as a specific E2 ubiquitin-conjugating enzyme for the Fanconi anemia complex by associating with E3 ubiquitin-protein ligase FANCL and catalyzing monoubiquitination of FANCD2, a key step in the DNA damage pathway. Also mediates monoubiquitination of FANCL and FANCI. May contribute to ubiquitination and degradation of BRCA1. In vitro able to promote polyubiquitination using all 7 ubiquitin Lys residues, but may prefer 'Lys-11'-, 'Lys-27'-, 'Lys-48'- and 'Lys-63'-linked polyubiquitination. This is Ubiquitin-conjugating enzyme E2 T (Ube2t) from Mus musculus (Mouse).